The chain runs to 533 residues: Retinoic acid receptor RXR-beta (533 aa).

A disordered region spans residues 1-24; sequence MSWAARPPFLPQRHAAGQCGPVGV. The segment at 1 to 204 is modulating; it reads MSWAARPPFL…PGGPGAGKRL (204 aa). Arg-25 is subject to Omega-N-methylarginine. The interval 37 to 183 is disordered; sequence RRRRPWLDPA…GPPEDVKPPV (147 aa). Positions 46 to 61 are enriched in low complexity; sequence AAAAAAAAAAGEQQTP. A compositionally biased stretch (basic and acidic residues) spans 67-82; sequence EAGRDGMGDSGRDSRS. Low complexity predominate over residues 83 to 94; it reads PDSSSPNPLSQG. Composition is skewed to pro residues over residues 95 to 109 and 118 to 129; these read APPP…PPSS and APPPPPMPPPQL. Low complexity predominate over residues 130 to 143; it reads GSPFPVISSSMGSP. Over residues 144–153 the composition is skewed to pro residues; that stretch reads GLPPPAPPGF. 2 NR C4-type zinc fingers span residues 205–225 and 241–265; these read CAIC…CEGC and CRDN…YQKC. Residues 205 to 270 constitute a DNA-binding region (nuclear receptor); the sequence is CAICGDRSSG…RYQKCLATGM (66 aa). Residues 271–295 form a hinge region; it reads KREAVQEERQRGKDKDGDGEGAGGA. Positions 276 to 288 are enriched in basic and acidic residues; the sequence is QEERQRGKDKDGD. Disordered regions lie at residues 276–299 and 313–336; these read QEER…PEEM and QKSD…NDPV. Residues 296 to 529 enclose the NR LBD domain; that stretch reads PEEMPVDRIL…TFLMEMLEAP (234 aa). Positions 320 to 329 are enriched in gly residues; sequence EGPGGTGGSG.

The protein belongs to the nuclear hormone receptor family. NR2 subfamily. In terms of assembly, homodimer (in vitro). Heterodimer with other retinoic acid receptor family members. Binds DNA preferentially as a RAR/RXR heterodimer. Interacts with NR1H3. Interacts with AKAP13.

The protein localises to the nucleus. It localises to the cytoplasm. In terms of biological role, receptor for retinoic acid. Retinoic acid receptors bind as heterodimers to their target response elements in response to their ligands, all-trans or 9-cis retinoic acid, and regulate gene expression in various biological processes. The RAR/RXR heterodimers bind to the retinoic acid response elements (RARE). This is Retinoic acid receptor RXR-beta (RXRB) from Canis lupus familiaris (Dog).